The primary structure comprises 138 residues: Acidic phospholipase A2 BE-I-PLA2 (138 aa).

The signal sequence occupies residues 1–16; the sequence is MRTLWIMAVLLVGVEG. 7 disulfides stabilise this stretch: Cys42/Cys131, Cys44/Cys60, Cys59/Cys111, Cys65/Cys138, Cys66/Cys104, Cys73/Cys97, and Cys91/Cys102. Tyr43, Gly45, and Gly47 together coordinate Ca(2+). His63 is an active-site residue. Asp64 lines the Ca(2+) pocket. The active site involves Asp105.

This sequence belongs to the phospholipase A2 family. Group II subfamily. D49 sub-subfamily. The cofactor is Ca(2+). As to expression, expressed by the venom gland.

Its subcellular location is the secreted. It catalyses the reaction a 1,2-diacyl-sn-glycero-3-phosphocholine + H2O = a 1-acyl-sn-glycero-3-phosphocholine + a fatty acid + H(+). In terms of biological role, snake venom phospholipase A2 that shows a potent inhibition of human platelet aggregation. This inhibition is concentration-dependent when aggregation is induced by collagen, and concentration-independent when aggregation is induced by arachidonic acid. In human umbilical-cord vein endothelial cells, this toxin stimulates endothelial cells to release prostaglandin I(2), suggesting an increase of its potential anti-platelet activity in vivo. PLA2 catalyzes the calcium-dependent hydrolysis of the 2-acyl groups in 3-sn-phosphoglycerides. The sequence is that of Acidic phospholipase A2 BE-I-PLA2 from Bothrops erythromelas (Caatinga lance head).